The primary structure comprises 153 residues: MTAPADEAPAVEDAPVAEDIAPVPAGRPVQTVGRRKEAVVRVRLVPGNGGFKLNGKSLEQYFPNKVHQQLIKEPLVTVERVESFDVAATLRGGGPSGQAGALRMAIARALVELDADDRPALKKAGMLTRDSREKERKKYGLKKARKAPQYSKR.

A compositionally biased stretch (low complexity) spans 1–19; the sequence is MTAPADEAPAVEDAPVAED. Disordered stretches follow at residues 1-23 and 121-153; these read MTAPADEAPAVEDAPVAEDIAPV and LKKAGMLTRDSREKERKKYGLKKARKAPQYSKR. The span at 129-138 shows a compositional bias: basic and acidic residues; the sequence is RDSREKERKK. Basic residues predominate over residues 139–153; that stretch reads YGLKKARKAPQYSKR.

The protein belongs to the universal ribosomal protein uS9 family.

The protein is Small ribosomal subunit protein uS9 of Saccharopolyspora erythraea (strain ATCC 11635 / DSM 40517 / JCM 4748 / NBRC 13426 / NCIMB 8594 / NRRL 2338).